A 260-amino-acid polypeptide reads, in one-letter code: Small ribosomal subunit protein cS22 (260 aa).

A chloroplast-targeting transit peptide spans 1–62 (MATISSILPC…TNPPLLKVRA (62 aa)). The span at 63–78 (VVTEETSSSSTASSSS) shows a compositional bias: low complexity. The disordered stretch occupies residues 63–83 (VVTEETSSSSTASSSSDGEGA). 2 RRM domains span residues 84–162 (RRLY…ITEK) and 184–260 (YKVY…VNKA).

Component of the chloroplast small ribosomal subunit (SSU). Mature 70S chloroplast ribosomes of higher plants consist of a small (30S) and a large (50S) subunit. The 30S small subunit contains 1 molecule of ribosomal RNA (16S rRNA) and 24 different proteins. The 50S large subunit contains 3 rRNA molecules (23S, 5S and 4.5S rRNA) and 33 different proteins.

It localises to the plastid. The protein localises to the chloroplast. Component of the chloroplast ribosome (chloro-ribosome), a dedicated translation machinery responsible for the synthesis of chloroplast genome-encoded proteins, including proteins of the transcription and translation machinery and components of the photosynthetic apparatus. cS22 may have a role in the recruitment of stored chloroplast mRNAs for active protein synthesis. This is Small ribosomal subunit protein cS22 (PSRP2) from Spinacia oleracea (Spinach).